Consider the following 110-residue polypeptide: Small ribosomal subunit protein bS16 (110 aa).

A disordered region spans residues 87 to 110 (ARQNPIKAVPRKERKAQAEAAAKG).

It belongs to the bacterial ribosomal protein bS16 family.

The polypeptide is Small ribosomal subunit protein bS16 (Bradyrhizobium sp. (strain BTAi1 / ATCC BAA-1182)).